We begin with the raw amino-acid sequence, 351 residues long: Calcium release-activated calcium channel protein 1 (351 aa).

Positions 1-21 (MSVWTTANNSGLETPTKSPIT) are enriched in polar residues. Disordered stretches follow at residues 1–39 (MSVW…TGNH) and 71–141 (HAHP…EDLH). At 1 to 163 (MSVWTTANNS…SRAKLKASSK (163 aa)) the chain is on the cytoplasmic side. 2 stretches are compositionally biased toward low complexity: residues 22-33 (SSVPRAARSSAV) and 80-93 (SNSP…SNNS). Residues 94 to 106 (AGFQRTSISNSLL) show a composition bias toward polar residues. A helical transmembrane segment spans residues 164–181 (TSALLSGFAMVAMVEVQL). At 182 to 191 (DHDTNVPPGM) the chain is on the extracellular side. A helical membrane pass occupies residues 192–212 (LIAFAICTTLLVAVHMLALMI). Residues 213–248 (STCILPNIETVCNLHSISLVHESPHERLHWYIETAW) lie on the Cytoplasmic side of the membrane. A helical transmembrane segment spans residues 249–269 (AFSTLLGLILFLLEIAILCWV). The Extracellular portion of the chain corresponds to 270-277 (KFYDLSPP). A helical transmembrane segment spans residues 278–298 (AAWSACVVLIPVMIIFMAFAI). Residues 299-351 (HFYRSLVSHKYEVTVSGIRELEMLKEQMEQDHLEHHNNIRNNGMNYGASGDIV) lie on the Cytoplasmic side of the membrane.

The protein belongs to the Orai family. As to quaternary structure, hexamer.

The protein resides in the cell membrane. It carries out the reaction Ca(2+)(in) = Ca(2+)(out). Its function is as follows. Pore-forming subunit of inward rectifying Ca(2+) release-activated Ca(2+) (CRAC) channels. Assembles in hexameric CRAC channels that mediate Ca(2+) influx upon depletion of endoplasmic reticulum Ca(2+) store and channel activation by Ca(2+) sensor Stim, a process known as store-operated Ca(2+) entry (SOCE). Regulates transcription factor NFAT nuclear import. This chain is Calcium release-activated calcium channel protein 1, found in Drosophila melanogaster (Fruit fly).